The following is an 826-amino-acid chain: E3 ubiquitin-protein ligase SH3RF1 (826 aa).

The RING-type zinc-finger motif lies at 12–53; that stretch reads CPVCLERLDASAKVLPCQHTFCKRCLLGIVSSRKELRCPECR. A disordered region spans residues 80-130; the sequence is PRKAGDGGSAGNSTNALRAQGSVTTNGGLNDAQNTQSGQQRIQARSPPVRG. Residues 90–122 show a composition bias toward polar residues; the sequence is GNSTNALRAQGSVTTNGGLNDAQNTQSGQQRIQ. SH3 domains follow at residues 132-191 and 194-257; these read PQLP…IIKP and QPPP…FNSA. Residues 266–319 are disordered; that stretch reads KPSGADTGEGSSGTSHSGNSQKQADAKKNTKKRHSFTSLTMSNKSSQSVQNRHS. The segment covering 273 to 285 has biased composition (low complexity); that stretch reads GEGSSGTSHSGNS. Residues 301-317 show a composition bias toward polar residues; the sequence is FTSLTMSNKSSQSVQNR. Positions 398 to 459 constitute an SH3 3 domain; it reads ARPSVFIAIY…PGNYVAPVTR (62 aa). 2 disordered regions span residues 647–694 and 725–759; these read NSAA…QTNS and DSVS…CSSL. Residues 652–663 show a composition bias toward basic and acidic residues; that stretch reads KQDKDSKKEKKG. Residues 767 to 826 enclose the SH3 4 domain; it reads RPCERYRVMVSYPPQSEAELELKEGDIVFVHKKREDGWFKGTLQRNGKTGLFPGSFVENI.

The protein belongs to the SH3RF family. Post-translationally, autoubiquitinated. Ubiquitinated by SH3RF2, leading to proteasome-mediated degradation.

It localises to the cytoplasm. It is found in the perinuclear region. The protein resides in the cell projection. The protein localises to the lamellipodium. Its subcellular location is the golgi apparatus. It localises to the trans-Golgi network. It catalyses the reaction S-ubiquitinyl-[E2 ubiquitin-conjugating enzyme]-L-cysteine + [acceptor protein]-L-lysine = [E2 ubiquitin-conjugating enzyme]-L-cysteine + N(6)-ubiquitinyl-[acceptor protein]-L-lysine.. It participates in protein modification; protein ubiquitination. Has E3 ubiquitin-protein ligase activity. In the absence of an external substrate, it can catalyze self-ubiquitination. Acts as a scaffold protein that contributes to the effective activation of the JNK signaling pathway. Plays an essential role in the anterior neural development. In Xenopus laevis (African clawed frog), this protein is E3 ubiquitin-protein ligase SH3RF1 (sh3rf1).